Consider the following 1357-residue polypeptide: DNA-directed RNA polymerase subunit beta (1357 aa).

This sequence belongs to the RNA polymerase beta chain family. In terms of assembly, the RNAP catalytic core consists of 2 alpha, 1 beta, 1 beta' and 1 omega subunit. When a sigma factor is associated with the core the holoenzyme is formed, which can initiate transcription.

The enzyme catalyses RNA(n) + a ribonucleoside 5'-triphosphate = RNA(n+1) + diphosphate. Its function is as follows. DNA-dependent RNA polymerase catalyzes the transcription of DNA into RNA using the four ribonucleoside triphosphates as substrates. In Pseudomonas syringae pv. syringae (strain B728a), this protein is DNA-directed RNA polymerase subunit beta.